Here is a 129-residue protein sequence, read N- to C-terminus: Large ribosomal subunit protein bL20 (129 aa).

Belongs to the bacterial ribosomal protein bL20 family.

In terms of biological role, binds directly to 23S ribosomal RNA and is necessary for the in vitro assembly process of the 50S ribosomal subunit. It is not involved in the protein synthesizing functions of that subunit. The chain is Large ribosomal subunit protein bL20 from Kineococcus radiotolerans (strain ATCC BAA-149 / DSM 14245 / SRS30216).